The following is an 861-amino-acid chain: Ribosome biogenesis protein BOP1 homolog (861 aa).

Residues 1–237 (MVANKSKATK…GDTSDEEDIR (237 aa)) form a disordered region. Positions 29–45 (NGRSTKQPEADSDQSAS) are enriched in polar residues. Acidic residues-rich tracts occupy residues 62–77 (DDGD…DASD) and 87–143 (SDSD…EDLA). Composition is skewed to basic and acidic residues over residues 144 to 156 (EPEK…EGSK), 174 to 190 (ETKK…EKLA), and 212 to 223 (PERKTGRLKNSD). WD repeat units follow at residues 522–561 (GHTD…CIKT), 563–603 (PTGD…CLLS), 692–730 (KSKG…LLKK), 733–772 (PSCK…RPYQ), 776–815 (LHFS…DLMQ), and 831–861 (VNDF…RLYT).

The protein belongs to the WD repeat BOP1/ERB1 family.

The protein resides in the nucleus. It is found in the nucleolus. The protein localises to the nucleoplasm. Functionally, required for maturation of ribosomal RNAs and formation of the large ribosomal subunit. The protein is Ribosome biogenesis protein BOP1 homolog of Culex quinquefasciatus (Southern house mosquito).